The primary structure comprises 215 residues: Redox-sensing transcriptional repressor Rex (215 aa).

The segment at residues 18-57 (LYYRFLKNLHASGKQRVSSAELSEAVKVDPATIRRDFSYF) is a DNA-binding region (H-T-H motif). 92 to 97 (GVGNLG) provides a ligand contact to NAD(+).

The protein belongs to the transcriptional regulatory Rex family. As to quaternary structure, homodimer.

The protein resides in the cytoplasm. Its function is as follows. Modulates transcription in response to changes in cellular NADH/NAD(+) redox state. In Geobacillus sp. (strain WCH70), this protein is Redox-sensing transcriptional repressor Rex.